Here is a 201-residue protein sequence, read N- to C-terminus: Probable chemoreceptor glutamine deamidase CheD 1 (201 aa).

Belongs to the CheD family.

The enzyme catalyses L-glutaminyl-[protein] + H2O = L-glutamyl-[protein] + NH4(+). Functionally, probably deamidates glutamine residues to glutamate on methyl-accepting chemotaxis receptors (MCPs), playing an important role in chemotaxis. The protein is Probable chemoreceptor glutamine deamidase CheD 1 of Dechloromonas aromatica (strain RCB).